The sequence spans 235 residues: MAETWMALPLFNRQNSPESSRDVLSMASPGLLPIDPSPEHDETNKFGPFDLLDNLPGELQLPADLNPARVGPTTHLPDLTDRADPEPRWMQISDLEVVGPGAVTCPFPGCKSTLRFTGSRELRRHYKQHFKRFFCRYPHCPQAGPGLQGPHPSTKRGFATRKDRARHEAKHDPRIQCPCLDERGERCSRMFSRLDNMRDHVRRIHNNSHYAGQETHGTADAIPDIDIHHEIEARS.

The disordered stretch occupies residues 14–45 (QNSPESSRDVLSMASPGLLPIDPSPEHDETNK). The C2H2-type zinc-finger motif lies at 175–205 (IQCPCLDERGERCSRMFSRLDNMRDHVRRIH).

It localises to the nucleus. In terms of biological role, transcription factor; part of the gene cluster that mediates the biosynthesis of heptelidic acid (HA), a sesquiterpene lactone that acts as an inhibitor of glyceraldehyde-3-phosphatedehydrogenase (GAPDH) and a growth inhibitor of the salt-tolerant lactic acid bacteria in soy sauce brewing. Both hepR and hepS regulate the transcription of the heptelidic acid cluster, but they are not involved in mutual transcriptional regulation and act with different mechanisms. In Aspergillus oryzae (strain ATCC 42149 / RIB 40) (Yellow koji mold), this protein is Transcription factor hepR.